The following is a 483-amino-acid chain: Protein nucleotidyltransferase YdiU (483 aa).

Gly-81, Gly-83, Arg-84, Lys-103, Asp-115, Gly-116, Arg-166, and Arg-173 together coordinate ATP. Asp-244 (proton acceptor) is an active-site residue. Residues Asn-245 and Asp-254 each contribute to the Mg(2+) site. ATP is bound at residue Asp-254.

It belongs to the SELO family. It depends on Mg(2+) as a cofactor. Mn(2+) serves as cofactor.

The enzyme catalyses L-seryl-[protein] + ATP = 3-O-(5'-adenylyl)-L-seryl-[protein] + diphosphate. It catalyses the reaction L-threonyl-[protein] + ATP = 3-O-(5'-adenylyl)-L-threonyl-[protein] + diphosphate. It carries out the reaction L-tyrosyl-[protein] + ATP = O-(5'-adenylyl)-L-tyrosyl-[protein] + diphosphate. The catalysed reaction is L-histidyl-[protein] + UTP = N(tele)-(5'-uridylyl)-L-histidyl-[protein] + diphosphate. The enzyme catalyses L-seryl-[protein] + UTP = O-(5'-uridylyl)-L-seryl-[protein] + diphosphate. It catalyses the reaction L-tyrosyl-[protein] + UTP = O-(5'-uridylyl)-L-tyrosyl-[protein] + diphosphate. In terms of biological role, nucleotidyltransferase involved in the post-translational modification of proteins. It can catalyze the addition of adenosine monophosphate (AMP) or uridine monophosphate (UMP) to a protein, resulting in modifications known as AMPylation and UMPylation. The sequence is that of Protein nucleotidyltransferase YdiU from Shewanella halifaxensis (strain HAW-EB4).